The sequence spans 397 residues: MNIHEYQGKALLKSFGAPVAEGVPVFKASEAEAAARALPGPLYVVKSQIHAGGRGKGKFKELSPDAKGGVRLAKSVADVVANANEMLGHTLVTKQTGPAGKQVNRLYIEDGADIERELYLSILVDRSVGRIAFVVSTEGGMDIEAVAHDTPEKVITVAIDPERGVTADDVKKLNAALKLDGDAAKDGGTLFPILYKAFIEKDMSLLEVNPLIVMKNGRLRVLDAKVSFDNNALFRHPDVLELRDTTEEDEKEIEASKYDLAYVALDGNIGCMVNGAGLAMATMDIIKLYGAEPANFLDVGGGASKEKVTAAFKIITKDPAVKGILINIFGGIMKCDIIAEGVIAAVKEVGLEVPLVVRLEGTNAELGKKIINDSGLNVVSADDLDDAAKKIVAAVKG.

Positions Lys-9–Glu-254 constitute an ATP-grasp domain. ATP is bound by residues Lys-46, Gly-53 to Gly-55, Glu-109, Ala-112, and Glu-117. Asn-209 and Asp-223 together coordinate Mg(2+). Substrate is bound by residues Asn-274 and Gly-331–Met-333.

Belongs to the succinate/malate CoA ligase beta subunit family. In terms of assembly, heterotetramer of two alpha and two beta subunits. It depends on Mg(2+) as a cofactor.

It carries out the reaction succinate + ATP + CoA = succinyl-CoA + ADP + phosphate. It catalyses the reaction GTP + succinate + CoA = succinyl-CoA + GDP + phosphate. The protein operates within carbohydrate metabolism; tricarboxylic acid cycle; succinate from succinyl-CoA (ligase route): step 1/1. Its function is as follows. Succinyl-CoA synthetase functions in the citric acid cycle (TCA), coupling the hydrolysis of succinyl-CoA to the synthesis of either ATP or GTP and thus represents the only step of substrate-level phosphorylation in the TCA. The beta subunit provides nucleotide specificity of the enzyme and binds the substrate succinate, while the binding sites for coenzyme A and phosphate are found in the alpha subunit. This is Succinate--CoA ligase [ADP-forming] subunit beta from Mesorhizobium japonicum (strain LMG 29417 / CECT 9101 / MAFF 303099) (Mesorhizobium loti (strain MAFF 303099)).